Here is a 525-residue protein sequence, read N- to C-terminus: Heat shock factor protein 1 (525 aa).

Position 1 is an N-acetylmethionine (Met1). Positions 15 to 120 (VPAFLTKLWT…LLENIKRKVT (106 aa)) are DNA-binding domain. Lys80 carries the N6-acetyllysine modification. At Lys91 the chain carries N6-acetyllysine; alternate. Lys91 participates in a covalent cross-link: Glycyl lysine isopeptide (Lys-Gly) (interchain with G-Cter in SUMO2); alternate. At Lys118 the chain carries N6-acetyllysine. Ser121 bears the Phosphoserine; by MAPKAPK2 mark. Residues 130 to 203 (IKIRQDSVTK…ISLVQSNRIL (74 aa)) are hydrophobic repeat HR-A/B. A Glycyl lysine isopeptide (Lys-Gly) (interchain with G-Cter in SUMO2) cross-link involves residue Lys131. Residue Thr142 is modified to Phosphothreonine; by CK2. An N6-acetyllysine mark is found at Lys150 and Lys188. Residues 203–224 (LGVKRKIPLMLNDGGPAHPMPK) form a d domain region. At Lys208 the chain carries N6-acetyllysine; alternate. A Glycyl lysine isopeptide (Lys-Gly) (interchain with G-Cter in SUMO2); alternate cross-link involves residue Lys208. The tract at residues 221–310 (PMPKYGRQYS…PPSPPQSPRA (90 aa)) is regulatory domain. Lys224 is covalently cross-linked (Glycyl lysine isopeptide (Lys-Gly) (interchain with G-Cter in SUMO2)). Phosphoserine; by CAMK2A is present on Ser230. Positions 266–365 (SDITELAPGS…RPPSPLPASA (100 aa)) are disordered. Residues 272 to 283 (APGSPVASSGGS) show a composition bias toward low complexity. Ser275 and Ser292 each carry phosphoserine. Lys298 carries the N6-acetyllysine; alternate modification. Residue Lys298 forms a Glycyl lysine isopeptide (Lys-Gly) (interchain with G-Cter in SUMO2); alternate linkage. Lys298 participates in a covalent cross-link: Glycyl lysine isopeptide (Lys-Gly) (interchain with G-Cter in SUMO); alternate. Position 303 is a phosphoserine; by GSK3-beta (Ser303). A Phosphoserine; by MAPK3 modification is found at Ser307. A phosphoserine mark is found at Ser314 and Ser319. Ser320 carries the phosphoserine; by PKA modification. Phosphothreonine is present on Thr324. Phosphoserine; by MAPK12 is present on Ser327. Residue Ser346 is modified to Phosphoserine. Ser359 carries the phosphoserine; by MAPK8 modification. The interval 367–525 (EKCLSVACLD…PPKAKDPTVS (159 aa)) is transactivation domain. Residues 380–405 (LSDHLDAMDSNLDNLQTMLTSHGFSV) form a hydrophobic repeat HR-C region. Positions 408–416 (STLLDLFSP) match the 9aaTAD motif. Residue Ser415 is modified to Phosphoserine; by PLK1. A Phosphoserine modification is found at Ser440. The tract at residues 495–525 (YFSEGDDYSDDPTISLLTGSEPPKAKDPTVS) is disordered. At Lys520 the chain carries N6-acetyllysine.

The protein belongs to the HSF family. In terms of assembly, monomer; cytoplasmic latent and transcriptionally inactive monomeric form in unstressed cells. Homotrimer; in response to stress, such as heat shock, homotrimerizes and translocates into the nucleus, binds to heat shock element (HSE) sequences in promoter of heat shock protein (HSP) genes and acquires transcriptional ability. Interacts (via monomeric form) with FKBP4; this interaction occurs in unstressed cells. Associates (via monomeric form) with HSP90 proteins in a multichaperone complex in unnstressed cell; this association maintains HSF1 in a non-DNA-binding and transcriptional inactive form by preventing HSF1 homotrimerization. Homotrimeric transactivation activity is modulated by protein-protein interactions and post-translational modifications. Interacts with HSP90AA1; this interaction is decreased in a IER5-dependent manner, promoting HSF1 accumulation in the nucleus, homotrimerization and DNA-binding activities. Part (via regulatory domain in the homotrimeric form) of a large heat shock-induced HSP90-dependent multichaperone complex at least composed of FKBP4, FKBP5, HSP90 proteins, PPID, PPP5C and PTGES3; this association maintains the HSF1 homotrimeric DNA-bound form in a transcriptionally inactive form. Interacts with BAG3 (via BAG domain); this interaction occurs in normal and heat-shocked cells promoting nuclear shuttling of HSF1 in a BAG3-dependent manner. Interacts (via homotrimeric and hyperphosphorylated form) with FKBP4; this interaction occurs upon heat shock in a HSP90-dependent multichaperone complex. Interacts (via homotrimeric form preferentially) with EEF1A proteins. In heat shocked cells, stress-denatured proteins compete with HSF1 homotrimeric DNA-bound form for association of the HSP90-dependent multichaperone complex, and hence alleviating repression of HSF1-mediated transcriptional activity. Interacts (via homotrimeric form preferentially) with DAXX; this interaction relieves homotrimeric HSF1 from repression of its transcriptional activity by HSP90-dependent multichaperone complex upon heat shock. Interacts (via D domain and preferentially with hyperphosphorylated form) with JNK1; this interaction occurs under both normal growth conditions and immediately upon heat shock. Interacts (via D domain and preferentially with hyperphosphorylated form) with MAPK3; this interaction occurs upon heat shock. Interacts with IER5 (via central region); this interaction promotes PPP2CA-induced dephosphorylation on Ser-121, Ser-307, Ser-314 and Thr-324 and HSF1 transactivation activity. Found in a ribonucleoprotein complex composed of the HSF1 homotrimeric form, translation elongation factor eEF1A proteins and non-coding RNA heat shock RNA-1 (HSR1); this complex occurs upon heat shock and stimulates HSF1 DNA-binding activity. Interacts (via transactivation domain) with HSPA1A/HSP70 and DNAJB1; these interactions result in the inhibition of heat shock- and HSF1-induced transcriptional activity during the attenuation and recovery phase from heat shock. Interacts (via Ser-303 and Ser-307 phosphorylated form) with YWHAE; this interaction promotes HSF1 sequestration in the cytoplasm in an ERK-dependent manner. Found in a complex with IER5 and PPP2CA. Interacts with TPR; this interaction increases upon heat shock and stimulates export of HSP70 mRNA. Interacts with SYMPK (via N-terminus) and CSTF2; these interactions occur upon heat shock. Interacts (via transactivation domain) with HSPA8. Interacts with EEF1D; this interaction occurs at heat shock promoter element (HSE) sequences. Interacts with MAPKAPK2. Interacts with PRKACA/PKA. Interacts (via transactivation domain) with GTF2A2. Interacts (via transactivation domain) with GTF2B. Interacts (via transactivation domain) with TBP. Interacts with CDK9, CCNT1 and EP300. Interacts (via N-terminus) with XRCC5 (via N-terminus) and XRCC6 (via N-terminus); these interactions are direct and prevent XRCC5/XRCC6 heterodimeric binding and non-homologous end joining (NHEJ) repair activities induced by ionizing radiation (IR). Interacts with PLK1; this interaction occurs during the early mitotic period, increases upon heat shock but does not modulate neither HSF1 homotrimerization and DNA-binding activities. Interacts with CDC20; this interaction occurs in mitosis in a MAD2L1-dependent manner and prevents PLK1-stimulated degradation of HSF1 by blocking the recruitment of the SCF(BTRC) ubiquitin ligase complex. Interacts with MAD2L1; this interaction occurs in mitosis. Interacts with BTRC; this interaction occurs during mitosis, induces its ubiquitin-dependent degradation following stimulus-dependent phosphorylation, a process inhibited by CDC20. Interacts with HSP90AA1 and HSP90AB1. Forms a complex with TTC5/STRAP and p300/EP300; these interactions augment chromatin-bound HSF1 and p300/EP300 histone acetyltransferase activity. Post-translationally, phosphorylated. Phosphorylated in unstressed cells; this phosphorylation is constitutive and implicated in the repression of HSF1 transcriptional activity. Phosphorylated on Ser-121 by MAPKAPK2; this phosphorylation promotes interaction with HSP90 proteins and inhibits HSF1 homotrimerization, DNA-binding and transactivation activities. Phosphorylation on Ser-303 by GSK3B/GSK3-beta and on Ser-307 by MAPK3 within the regulatory domain is involved in the repression of HSF1 transcriptional activity and occurs in a RAF1-dependent manner. Phosphorylation on Ser-303 and Ser-307 increases HSF1 nuclear export in a YWHAE- and XPO1/CRM1-dependent manner. Phosphorylation on Ser-307 is a prerequisite for phosphorylation on Ser-303. According to, Ser-303 is not phosphorylated in unstressed cells. Phosphorylated on Ser-415 by PLK1; phosphorylation promotes nuclear translocation upon heat shock. Hyperphosphorylated upon heat shock and during the attenuation and recovery phase period of the heat shock response. Phosphorylated on Thr-142; this phosphorylation increases HSF1 transactivation activity upon heat shock. Phosphorylation on Ser-230 by CAMK2A; this phosphorylation enhances HSF1 transactivation activity upon heat shock. Phosphorylation on Ser-327 by MAPK12; this phosphorylation enhances HSF1 nuclear translocation, homotrimerization and transactivation activities upon heat shock. Phosphorylated on Ser-320 by PRKACA/PKA; this phosphorylation promotes nuclear localization and transcriptional activity upon heat shock. Phosphorylated on Ser-359 by MAPK8; this phosphorylation occurs upon heat shock, induces HSF1 translocation into nuclear stress bodies and negatively regulates transactivation activity. Neither basal nor stress-inducible phosphorylation on Ser-230, Ser-292, Ser-303, Ser-307, Ser-314, Ser-319, Ser-320, Thr-324, Ser-327, Ser-339, Ser-346, Ser-359 and Ser-364 within the regulatory domain is involved in the regulation of HSF1 subcellular localization or DNA-binding activity; however, it negatively regulates HSF1 transactivation activity. Phosphorylated by PLK1 in the early mitotic period; this phosphorylation regulates HSF1 localization to the spindle pole, the recruitment of the SCF(BTRC) ubiquitin ligase complex inducing HSF1 degradation, and hence mitotic progression. Dephosphorylated on Ser-121, Ser-307, Ser-314, Thr-324 by phosphatase PPP2CA in an IER5-dependent manner, leading to HSF1-mediated transactivation activity. Sumoylated with SUMO1 and SUMO2 upon heat shock in a ERK2-dependent manner. Sumoylated by SUMO1 on Lys-298; sumoylation occurs upon heat shock and promotes its localization to nuclear stress bodies and DNA-binding activity. Phosphorylation on Ser-303 and Ser-307 is probably a prerequisite for sumoylation. In terms of processing, acetylated on Lys-118; this acetylation is decreased in a IER5-dependent manner. Acetylated on Lys-118, Lys-208 and Lys-298; these acetylations occur in a EP300-dependent manner. Acetylated on Lys-80; this acetylation inhibits DNA-binding activity upon heat shock. Deacetylated on Lys-80 by SIRT1; this deacetylation increases DNA-binding activity. Post-translationally, ubiquitinated by SCF(BTRC) and degraded following stimulus-dependent phosphorylation by PLK1 in mitosis. Polyubiquitinated. Undergoes proteasomal degradation upon heat shock and during the attenuation and recovery phase period of the heat shock response.

It is found in the nucleus. The protein resides in the cytoplasm. The protein localises to the nucleoplasm. Its subcellular location is the perinuclear region. It localises to the cytoskeleton. It is found in the spindle pole. The protein resides in the microtubule organizing center. The protein localises to the centrosome. Its subcellular location is the chromosome. It localises to the centromere. It is found in the kinetochore. Functions as a stress-inducible and DNA-binding transcription factor that plays a central role in the transcriptional activation of the heat shock response (HSR), leading to the expression of a large class of molecular chaperones, heat shock proteins (HSPs), that protect cells from cellular insult damage. In unstressed cells, is present in a HSP90-containing multichaperone complex that maintains it in a non-DNA-binding inactivated monomeric form. Upon exposure to heat and other stress stimuli, undergoes homotrimerization and activates HSP gene transcription through binding to site-specific heat shock elements (HSEs) present in the promoter regions of HSP genes. Upon heat shock stress, forms a chromatin-associated complex with TTC5/STRAP and p300/EP300 to stimulate HSR transcription, therefore increasing cell survival. Activation is reversible, and during the attenuation and recovery phase period of the HSR, returns to its unactivated form. Binds to inverted 5'-NGAAN-3' pentamer DNA sequences. Binds to chromatin at heat shock gene promoters. Activates transcription of transcription factor FOXR1 which in turn activates transcription of the heat shock chaperones HSPA1A and HSPA6 and the antioxidant NADPH-dependent reductase DHRS2. Also serves several other functions independently of its transcriptional activity. Involved in the repression of Ras-induced transcriptional activation of the c-fos gene in heat-stressed cells. Positively regulates pre-mRNA 3'-end processing and polyadenylation of HSP70 mRNA upon heat-stressed cells in a symplekin (SYMPK)-dependent manner. Plays a role in nuclear export of stress-induced HSP70 mRNA. Plays a role in the regulation of mitotic progression. Also plays a role as a negative regulator of non-homologous end joining (NHEJ) repair activity in a DNA damage-dependent manner. Involved in stress-induced cancer cell proliferation in a IER5-dependent manner. In Bos taurus (Bovine), this protein is Heat shock factor protein 1.